The chain runs to 176 residues: RNA pyrophosphohydrolase (176 aa).

The region spanning 6-149 (GYRPNVGIVI…KRDVYRRVMK (144 aa)) is the Nudix hydrolase domain. The Nudix box signature appears at 38–59 (GGINPGESPEQAMYRELYEEVG).

This sequence belongs to the Nudix hydrolase family. RppH subfamily. It depends on a divalent metal cation as a cofactor.

Its function is as follows. Accelerates the degradation of transcripts by removing pyrophosphate from the 5'-end of triphosphorylated RNA, leading to a more labile monophosphorylated state that can stimulate subsequent ribonuclease cleavage. The chain is RNA pyrophosphohydrolase from Photorhabdus laumondii subsp. laumondii (strain DSM 15139 / CIP 105565 / TT01) (Photorhabdus luminescens subsp. laumondii).